A 380-amino-acid chain; its full sequence is Crotonobetainyl-CoA reductase (380 aa).

This sequence belongs to the acyl-CoA dehydrogenase family. Homotetramer. FAD is required as a cofactor.

The protein resides in the cytoplasm. It carries out the reaction 4-(trimethylamino)butanoyl-CoA + oxidized [electron-transfer flavoprotein] + H(+) = crotonobetainyl-CoA + reduced [electron-transfer flavoprotein]. It participates in amine and polyamine metabolism; carnitine metabolism. In terms of biological role, catalyzes the reduction of crotonobetainyl-CoA to gamma-butyrobetainyl-CoA. The protein is Crotonobetainyl-CoA reductase of Shigella flexneri serotype 5b (strain 8401).